Reading from the N-terminus, the 374-residue chain is Peptide chain release factor 2 (374 aa).

An N5-methylglutamine modification is found at Gln-256.

It belongs to the prokaryotic/mitochondrial release factor family. In terms of processing, methylated by PrmC. Methylation increases the termination efficiency of RF2.

The protein resides in the cytoplasm. Peptide chain release factor 2 directs the termination of translation in response to the peptide chain termination codons UGA and UAA. The protein is Peptide chain release factor 2 of Mycobacterium leprae (strain Br4923).